A 335-amino-acid chain; its full sequence is Biotin synthase (335 aa).

The Radical SAM core domain maps to 53 to 276 (VEIEGIVSVK…RTILRFAGGR (224 aa)). [4Fe-4S] cluster-binding residues include Cys-66, Cys-70, and Cys-73. [2Fe-2S] cluster is bound by residues Cys-109, Cys-142, Cys-201, and Arg-271.

It belongs to the radical SAM superfamily. Biotin synthase family. Homodimer. Requires [4Fe-4S] cluster as cofactor. [2Fe-2S] cluster serves as cofactor.

It catalyses the reaction (4R,5S)-dethiobiotin + (sulfur carrier)-SH + 2 reduced [2Fe-2S]-[ferredoxin] + 2 S-adenosyl-L-methionine = (sulfur carrier)-H + biotin + 2 5'-deoxyadenosine + 2 L-methionine + 2 oxidized [2Fe-2S]-[ferredoxin]. It functions in the pathway cofactor biosynthesis; biotin biosynthesis; biotin from 7,8-diaminononanoate: step 2/2. In terms of biological role, catalyzes the conversion of dethiobiotin (DTB) to biotin by the insertion of a sulfur atom into dethiobiotin via a radical-based mechanism. The chain is Biotin synthase from Acidothermus cellulolyticus (strain ATCC 43068 / DSM 8971 / 11B).